The chain runs to 429 residues: MKKVLSIILGGGAGTRLYPLTKLRAKPAVPVAGKYRLIDIPVSNCINSEIFKIYVLTQFNSASLNRHIARTYNFTGFNEGFVEVLAAQQTPENPNWFQGTADAVRQYLWLMEEWDVEEYLILSGDHLYRMDYRQFIQRHRDTGADITLSVIPIDERRASDFGLMKIDDSGRIIDFSEKPKGEALTQMQVDTSVLGLTKEQAQKQPYIASMGIYVFKKEVLFKLLRESVERTDFGKEIIPDASKDYNVQAYLFDDYWEDIGTIEAFYHANLALTQQPQPPFSFYDEHAPIYTRARYLPPTKLLDCQITESIIGEGCILKNCRIQHSVLGVRSRIESGCVIEESLLMGADFYQASVERQCSLIENDIPVGIGTDTIIRGAIIDKNARIGHDVKIVNKDNVQEAERENQGFYIRSGIVVVLKNAVIPDGTII.

Alpha-D-glucose 1-phosphate-binding positions include glycine 162, glutamate 177–lysine 178, and serine 209.

Belongs to the bacterial/plant glucose-1-phosphate adenylyltransferase family. Homotetramer.

The enzyme catalyses alpha-D-glucose 1-phosphate + ATP + H(+) = ADP-alpha-D-glucose + diphosphate. The protein operates within glycan biosynthesis; glycogen biosynthesis. Its function is as follows. Involved in the biosynthesis of ADP-glucose, a building block required for the elongation reactions to produce glycogen. Catalyzes the reaction between ATP and alpha-D-glucose 1-phosphate (G1P) to produce pyrophosphate and ADP-Glc. This chain is Glucose-1-phosphate adenylyltransferase, found in Nostoc punctiforme (strain ATCC 29133 / PCC 73102).